Reading from the N-terminus, the 312-residue chain is Protoheme IX farnesyltransferase (312 aa).

The next 8 membrane-spanning stretches (helical) occupy residues 33 to 53 (VMLL…VSIN), 54 to 74 (PLYG…AGAL), 105 to 125 (FIFG…FVNW), 126 to 146 (FAAL…TIWL), 154 to 174 (IVIG…AATG), 181 to 201 (FLLF…LSLF), 243 to 263 (IIGF…IIFI), and 291 to 311 (FYLA…CFII).

Belongs to the UbiA prenyltransferase family. Protoheme IX farnesyltransferase subfamily.

The protein resides in the cell inner membrane. The enzyme catalyses heme b + (2E,6E)-farnesyl diphosphate + H2O = Fe(II)-heme o + diphosphate. It functions in the pathway porphyrin-containing compound metabolism; heme O biosynthesis; heme O from protoheme: step 1/1. Its function is as follows. Converts heme B (protoheme IX) to heme O by substitution of the vinyl group on carbon 2 of heme B porphyrin ring with a hydroxyethyl farnesyl side group. In Bartonella henselae (strain ATCC 49882 / DSM 28221 / CCUG 30454 / Houston 1) (Rochalimaea henselae), this protein is Protoheme IX farnesyltransferase.